The primary structure comprises 850 residues: Coiled-coil and C2 domain-containing protein 1B (850 aa).

The segment covering 1 to 10 has biased composition (basic residues); it reads MPGPRPRKGP. Disordered stretches follow at residues 1 to 21, 54 to 73, and 114 to 145; these read MPGPRPRKGPKTSGQGAETAK, LTGETGSTSRKPAPKGRAPL, and GVDEETGLVDDSEETSPDLSEEKTRDNTEQPV. Residues 114 to 129 show a composition bias toward acidic residues; the sequence is GVDEETGLVDDSEETS. The stretch at 167-213 forms a coiled coil; the sequence is LQALLEERIQNYREAAASAKEAGEAAKARRCERGLKTLESQLATVRK. Disordered regions lie at residues 215 to 277 and 436 to 525; these read GKIC…SDPD and FAEL…SPSV. The span at 234-244 shows a compositional bias: basic and acidic residues; it reads AHQERPSKDSE. The span at 440–450 shows a compositional bias: pro residues; sequence PVPPGFPPIPG. 2 stretches are compositionally biased toward low complexity: residues 489 to 502 and 511 to 524; these read PAQAPLAKKPAQPL and EPKASSSKESLSPS. S585 carries the post-translational modification Phosphoserine. The residue at position 588 (T588) is a Phosphothreonine. The region spanning 668–807 is the C2 domain; that stretch reads DPPSHHFELK…EKECEIREIM (140 aa).

In terms of assembly, interacts with CHMP4B. In terms of tissue distribution, expressed in epididymal sperm but not in testicular sperm (at protein level).

It localises to the nucleus. Functionally, transcription factor that binds specifically to the DRE (dual repressor element) and represses HTR1A gene transcription in neuronal cells. The polypeptide is Coiled-coil and C2 domain-containing protein 1B (Cc2d1b) (Rattus norvegicus (Rat)).